A 738-amino-acid chain; its full sequence is Nucleoprotein (738 aa).

A coiled-coil region spans residues 334–363 (VNVGEQYQQLREAATEAEKQLQQYAETREL). The tract at residues 418 to 640 (GDRYPDDNDI…QGSESEALPI (223 aa)) is disordered. The span at 461–476 (PYDDESNNYPDYEDSA) shows a compositional bias: acidic residues. A compositionally biased stretch (polar residues) spans 544-564 (PGSNTNQPQGNMSSTLQSMTP). Over residues 567-594 (EESEPDDQKDDDDESLTSLDSEGDEDVE) the composition is skewed to acidic residues. Polar residues predominate over residues 616 to 625 (VDTNQQNGPS).

It belongs to the filoviruses nucleoprotein family. Homooligomer. Homomultimerizes to form the nucleocapsid. Binds to viral genomic RNA. Interacts with VP35 and VP30 to form the nucleocapsid. Interacts with host PPP2R5C; this interaction leads to VP30 dephosphorylation and viral transcription. Interacts with VP24; this interaction facilitates nucleocapsid assembly and genome packaging. Interacts with matrix protein VP40; this interaction allows recruitment of the nucleocapsid into progeny virions. Interacts with host STAU1. Interacts with host NXF1 (via RNA-binding domain); this interaction recruits NXF1 to the inclusion bodies were viral replication takes place, probably to export viral mRNA-NXF1 complexes from these sites. Interacts with host CCDC92; this interaction sequesters NP in the host cytoplasm. Interacts with host TRIM14. Post-translationally, phosphorylated and O-glycosylated by host. Acetylated by host EP300 in vitro.

It is found in the virion. It localises to the host cytoplasm. Functionally, oligomerizes into helical capsid to encapsidate the viral genome, protecting it from nucleases and the cellular innate immune response. VP35 binds to and stabilizes monomeric NP, keeping it soluble. Upon virus replication, NP is recruited to bind cooperatively viral genomic RNA and VP35 is released. The encapsidated genomic RNA is termed the nucleocapsid and serves as template for transcription and replication. The nucleocapsid is helical with a pitch of 10.81 NP per turn and a diameter of about 22nm. Each NP binds to six nucleotides of viral genomic RNA, three being exposed to the solvant and three hidden into the nucleocapsid. Also recruits host PPP2R5C phosphatase to dephosphorylate VP30 and thereby promote viral transcription. Upon virion assembly and budding, NP binds to VP24 and possibly host STAU1. This chain is Nucleoprotein (NP), found in Sudan ebolavirus (strain Human/Uganda/Gulu/2000) (SEBOV).